We begin with the raw amino-acid sequence, 328 residues long: Formimidoylglutamase (328 aa).

Residues His133, Asp159, His161, Asp163, Asp253, and Asp255 each contribute to the Mn(2+) site.

This sequence belongs to the arginase family. Mn(2+) is required as a cofactor.

The enzyme catalyses N-formimidoyl-L-glutamate + H2O = formamide + L-glutamate. Its pathway is amino-acid degradation; L-histidine degradation into L-glutamate; L-glutamate from N-formimidoyl-L-glutamate (hydrolase route): step 1/1. Catalyzes the conversion of N-formimidoyl-L-glutamate to L-glutamate and formamide. The protein is Formimidoylglutamase of Streptococcus pyogenes serotype M18 (strain MGAS8232).